A 276-amino-acid chain; its full sequence is Hydroxyethylthiazole kinase (276 aa).

Residue Met-48 coordinates substrate. Positions 124 and 175 each coordinate ATP. Gly-202 serves as a coordination point for substrate.

It belongs to the Thz kinase family. Mg(2+) is required as a cofactor.

The catalysed reaction is 5-(2-hydroxyethyl)-4-methylthiazole + ATP = 4-methyl-5-(2-phosphooxyethyl)-thiazole + ADP + H(+). It functions in the pathway cofactor biosynthesis; thiamine diphosphate biosynthesis; 4-methyl-5-(2-phosphoethyl)-thiazole from 5-(2-hydroxyethyl)-4-methylthiazole: step 1/1. Its function is as follows. Catalyzes the phosphorylation of the hydroxyl group of 4-methyl-5-beta-hydroxyethylthiazole (THZ). In Clostridium beijerinckii (strain ATCC 51743 / NCIMB 8052) (Clostridium acetobutylicum), this protein is Hydroxyethylthiazole kinase.